A 939-amino-acid polypeptide reads, in one-letter code: Aconitate hydratase A (939 aa).

Residues 433-453 are disordered; the sequence is GSGESLATGAEGRPSKPVTVA. The [4Fe-4S] cluster site is built by Cys475, Cys541, and Cys544.

This sequence belongs to the aconitase/IPM isomerase family. Monomer. It depends on [4Fe-4S] cluster as a cofactor.

The catalysed reaction is citrate = D-threo-isocitrate. The enzyme catalyses (2S,3R)-3-hydroxybutane-1,2,3-tricarboxylate = 2-methyl-cis-aconitate + H2O. It functions in the pathway carbohydrate metabolism; tricarboxylic acid cycle; isocitrate from oxaloacetate: step 2/2. Its pathway is organic acid metabolism; propanoate degradation. Involved in the catabolism of short chain fatty acids (SCFA) via the tricarboxylic acid (TCA)(acetyl degradation route) and probably via the 2-methylcitrate cycle I (propionate degradation route). Catalyzes the reversible isomerization of citrate to isocitrate via cis-aconitate. Could catalyze the hydration of 2-methyl-cis-aconitate to yield (2R,3S)-2-methylisocitrate. The apo form of AcnA functions as a RNA-binding regulatory protein. In Corynebacterium glutamicum (strain ATCC 13032 / DSM 20300 / JCM 1318 / BCRC 11384 / CCUG 27702 / LMG 3730 / NBRC 12168 / NCIMB 10025 / NRRL B-2784 / 534), this protein is Aconitate hydratase A (acn).